Here is a 107-residue protein sequence, read N- to C-terminus: Urease subunit beta (107 aa).

The protein belongs to the urease beta subunit family. As to quaternary structure, heterotrimer of UreA (gamma), UreB (beta) and UreC (alpha) subunits. Three heterotrimers associate to form the active enzyme.

It is found in the cytoplasm. It catalyses the reaction urea + 2 H2O + H(+) = hydrogencarbonate + 2 NH4(+). It functions in the pathway nitrogen metabolism; urea degradation; CO(2) and NH(3) from urea (urease route): step 1/1. In Bacillus sp. (strain TB-90), this protein is Urease subunit beta.